We begin with the raw amino-acid sequence, 609 residues long: Protein alan shepard (609 aa).

Positions 1–12 (MHPRYSPAPPPL) are enriched in pro residues. Residues 1 to 96 (MHPRYSPAPP…ASVAAAPPTP (96 aa)) are disordered. Phosphotyrosine is present on Tyr5. Positions 13 to 35 (HQQQQQQPPQQQQQQMGGPHQQQ) are enriched in low complexity. Over residues 37 to 50 (GGVGPGTGHGGVGA) the composition is skewed to gly residues. Low complexity-rich tracts occupy residues 51–68 (AVGA…NSQQ) and 83–92 (SSSAASVAAA). 2 positions are modified to phosphotyrosine: Tyr152 and Tyr168. The interval 190–252 (PATTTYGQRV…AQNQNQQGGE (63 aa)) is disordered. Positions 204–252 (SPSNTNSSSSSNTGSQSGTLSTSLSNTTNTNTTMGPNGTAQNQNQQGGE) are enriched in low complexity. RRM domains lie at 257-330 (TNLY…MAKQ) and 336-415 (TNLY…FADG). The tract at residues 583 to 609 (MTDSEQASTAASPDEAYTQYPHQAAPK) is disordered.

Has a role in the perception of gravity. The protein is Protein alan shepard of Drosophila grimshawi (Hawaiian fruit fly).